The primary structure comprises 454 residues: Nucleoprotein (454 aa).

The interval 1 to 62 is disordered; sequence MSFVPGQENA…ATTQPNTGSV (62 aa). The segment covering 9–23 has biased composition (low complexity); that stretch reads NAGSRSSSGNRAGNG. Positions 49 to 61 are enriched in polar residues; sequence PKQTATTQPNTGS. The interval 56-197 is RNA-binding; sequence QPNTGSVVPH…GFYVEGSGRS (142 aa). One can recognise a CoV N NTD domain in the interval 64 to 193; it reads PHYSWFSGIT…VLPQGFYVEG (130 aa). Residues Arg109, Arg125, and Arg167 each coordinate RNA. Ser170 is modified (phosphoserine; by host). Phosphothreonine; by host is present on Thr177. Disordered regions lie at residues 186 to 230, 271 to 290, and 383 to 428; these read PQGF…STVK, PRQKRTPNKQCPVQQCFGKR, and AGGA…SREL. Over residues 193–212 the composition is skewed to low complexity; sequence GSGRSAPASRSGSRSQSRGP. A Phosphoserine; by host modification is found at Ser194. Residues 215 to 227 are compositionally biased toward polar residues; that stretch reads RARSSSNQRQPAS. Residues 260-383 form the CoV N CTD domain; sequence AKEVRQKILN…ENLNAYQNQA (124 aa). The dimerization stretch occupies residues 267 to 384; it reads ILNKPRQKRT…NLNAYQNQAG (118 aa). 2 positions are modified to phosphoserine; by host: Ser390 and Ser425. Position 429 is a phosphothreonine; by host (Thr429).

This sequence belongs to the betacoronavirus nucleocapsid protein family. As to quaternary structure, homooligomer. Both monomeric and oligomeric forms interact with RNA. Interacts with protein M. Interacts with NSP3; this interaction serves to tether the genome to the newly translated replicase-transcriptase complex at a very early stage of infection. In terms of processing, ADP-ribosylated. The ADP-ribosylation is retained in the virion during infection. Post-translationally, phosphorylated on serine and threonine residues.

The protein localises to the virion. It is found in the host endoplasmic reticulum-Golgi intermediate compartment. Its subcellular location is the host Golgi apparatus. Functionally, packages the positive strand viral genome RNA into a helical ribonucleocapsid (RNP) and plays a fundamental role during virion assembly through its interactions with the viral genome and membrane protein M. Plays an important role in enhancing the efficiency of subgenomic viral RNA transcription as well as viral replication. The sequence is that of Nucleoprotein from Rattus norvegicus (Rat).